The primary structure comprises 212 residues: Mediator of RNA polymerase II transcription subunit 20 (212 aa).

The protein belongs to the Mediator complex subunit 20 family. Component of the Mediator complex, which is composed of MED1, MED4, MED6, MED7, MED8, MED9, MED10, MED11, MED12, MED13, MED13L, MED14, MED15, MED16, MED17, MED18, MED19, MED20, MED21, MED22, MED23, MED24, MED25, MED26, MED27, MED29, MED30, MED31, CCNC, CDK8 and CDC2L6/CDK11. The MED12, MED13, CCNC and CDK8 subunits form a distinct module termed the CDK8 module. Mediator containing the CDK8 module is less active than Mediator lacking this module in supporting transcriptional activation. Individual preparations of the Mediator complex lacking one or more distinct subunits have been variously termed ARC, CRSP, DRIP, PC2, SMCC and TRAP. Interacts with PPARG.

It is found in the nucleus. Functionally, component of the Mediator complex, a coactivator involved in the regulated transcription of nearly all RNA polymerase II-dependent genes. Mediator functions as a bridge to convey information from gene-specific regulatory proteins to the basal RNA polymerase II transcription machinery. Mediator is recruited to promoters by direct interactions with regulatory proteins and serves as a scaffold for the assembly of a functional preinitiation complex with RNA polymerase II and the general transcription factors. In Rattus norvegicus (Rat), this protein is Mediator of RNA polymerase II transcription subunit 20 (Med20).